Here is a 145-residue protein sequence, read N- to C-terminus: Granulysin (145 aa).

A signal peptide spans 1–22 (MATWALLLLAAMLLGNPGLVFS). In terms of domain architecture, Saposin B-type spans 62–142 (LGRDYRTCLT…EDLRLCIPST (81 aa)). Intrachain disulfides connect C69–C132 and C96–C107.

Post-translationally, a 9 kDa form is produced by proteolytic processing of a 15 kDa protein. As to expression, expressed in natural killer and T-cells.

Its subcellular location is the secreted. Its function is as follows. Antimicrobial protein that kills intracellular pathogens. Active against a broad range of microbes, including Gram-positive and Gram-negative bacteria, fungi, and parasites. Kills Mycobacterium tuberculosis. The protein is Granulysin (GNLY) of Homo sapiens (Human).